Reading from the N-terminus, the 615-residue chain is Elongation factor 4 (615 aa).

Residues 14–196 (AMIRNFCIIA…EIVRQVPAPV (183 aa)) enclose the tr-type G domain. GTP contacts are provided by residues 26–31 (DHGKST) and 143–146 (NKID).

The protein belongs to the TRAFAC class translation factor GTPase superfamily. Classic translation factor GTPase family. LepA subfamily.

The protein localises to the cell membrane. The catalysed reaction is GTP + H2O = GDP + phosphate + H(+). Functionally, required for accurate and efficient protein synthesis under certain stress conditions. May act as a fidelity factor of the translation reaction, by catalyzing a one-codon backward translocation of tRNAs on improperly translocated ribosomes. Back-translocation proceeds from a post-translocation (POST) complex to a pre-translocation (PRE) complex, thus giving elongation factor G a second chance to translocate the tRNAs correctly. Binds to ribosomes in a GTP-dependent manner. In Frankia alni (strain DSM 45986 / CECT 9034 / ACN14a), this protein is Elongation factor 4.